The primary structure comprises 147 residues: Protein MC014 (147 aa).

Its subcellular location is the host nucleus. In Homo sapiens (Human), this protein is Protein MC014 (MC014).